The following is a 523-amino-acid chain: GMP synthase [glutamine-hydrolyzing] (523 aa).

The Glutamine amidotransferase type-1 domain maps to 8 to 205 (KILILDFGSQ…VVNICGCETK (198 aa)). Residue cysteine 85 is the Nucleophile of the active site. Catalysis depends on residues histidine 179 and glutamate 181. The region spanning 206-398 (WTAENIIEDA…LGLPAEMINR (193 aa)) is the GMPS ATP-PPase domain. 233–239 (SGGVDSS) lines the ATP pocket.

In terms of assembly, homodimer.

It catalyses the reaction XMP + L-glutamine + ATP + H2O = GMP + L-glutamate + AMP + diphosphate + 2 H(+). It participates in purine metabolism; GMP biosynthesis; GMP from XMP (L-Gln route): step 1/1. In terms of biological role, catalyzes the synthesis of GMP from XMP. In Haemophilus influenzae (strain 86-028NP), this protein is GMP synthase [glutamine-hydrolyzing].